The following is a 157-amino-acid chain: NADPH-dependent 7-cyano-7-deazaguanine reductase (157 aa).

Cys55 serves as the catalytic Thioimide intermediate. The Proton donor role is filled by Asp62. Residues Val77–Ser79 and His96–Glu97 each bind substrate.

The protein belongs to the GTP cyclohydrolase I family. QueF type 1 subfamily.

The protein localises to the cytoplasm. It carries out the reaction 7-aminomethyl-7-carbaguanine + 2 NADP(+) = 7-cyano-7-deazaguanine + 2 NADPH + 3 H(+). It functions in the pathway tRNA modification; tRNA-queuosine biosynthesis. In terms of biological role, catalyzes the NADPH-dependent reduction of 7-cyano-7-deazaguanine (preQ0) to 7-aminomethyl-7-deazaguanine (preQ1). This Neisseria meningitidis serogroup C / serotype 2a (strain ATCC 700532 / DSM 15464 / FAM18) protein is NADPH-dependent 7-cyano-7-deazaguanine reductase.